We begin with the raw amino-acid sequence, 1021 residues long: Chondroitin sulfate ABC endolyase (1021 aa).

Positions 1–24 are cleaved as a signal peptide; it reads MPIFRFTALAMTLGLLSAPYNAMA. Residues His43, Met70, Gln73, and Asp211 each coordinate Na(+). The active-site Proton acceptor is the His501. Tyr508 acts as the Proton donor in catalysis.

The protein belongs to the polysaccharide lyase 8 family. In terms of assembly, monomer.

It localises to the periplasm. The enzyme catalyses Endolytic cleavage of (1-&gt;4)-beta-galactosaminic bonds between N-acetylgalactosamine and either D-glucuronic acid or L-iduronic acid to produce a mixture of Delta(4)-unsaturated oligosaccharides of different sizes that are ultimately degraded to Delta(4)-unsaturated tetra- and disaccharides.. With respect to regulation, is inhibited by Zn(2+), Ni(2+), Fe(2+) and Cu(2+). Functionally, endolytic, broad-specificity glycosaminoglycan lyase, which degrades the polysaccharides chondroitin, chondroitin-4-sulfate, chondroitin-6-sulfate, dermatan sulfate and to a lesser extent hyaluronan, by beta-elimination of 1,4-hexosaminidic bond to unsaturated tetrasaccharides and disaccharides. Is not active against keratan sulfate, heparan sulfate, and heparin. Is able to promote functional recovery in the injured central nervous system (CNS), via its role in the disruption of the normal organization of the extracellular matrix (ECM). The protein is Chondroitin sulfate ABC endolyase of Proteus vulgaris.